Consider the following 860-residue polypeptide: Leucine--tRNA ligase (860 aa).

Residues 42 to 52 (PYPSGRLHMGH) carry the 'HIGH' region motif. The 'KMSKS' region signature appears at 619–623 (KMSKS). Residue lysine 622 coordinates ATP.

Belongs to the class-I aminoacyl-tRNA synthetase family.

The protein resides in the cytoplasm. The catalysed reaction is tRNA(Leu) + L-leucine + ATP = L-leucyl-tRNA(Leu) + AMP + diphosphate. This Photorhabdus laumondii subsp. laumondii (strain DSM 15139 / CIP 105565 / TT01) (Photorhabdus luminescens subsp. laumondii) protein is Leucine--tRNA ligase.